A 299-amino-acid chain; its full sequence is MSESAELTELYSAIEETTRVVGAPCRRDTVRPILTAYEDVIAQSVISFRVQTGTSDAGDLDCRFTLLPKDMDPYATALSNGLTAKTDHPVGSLLEEVHRQFPVDCYGIDFGAVGGFKKAWSFFRPDSLQSASDLAALPSMPSGVSENLGLFDRYGMTDTVSVVGFDYAKRSVNLYFTGASPESFEPRGIQAILRECGLPEPSDELLRFGEEAFAIYVTLSWDSQKIERVTYSVNTPDPMALPVRIDTRIEQLVKDAPLGSAGHRYVYGVTATPKGEYHKIQKYFQWQSRVEKMLTADAG.

It belongs to the aromatic prenyltransferase family.

It catalyses the reaction 5,10-dihydrophenazine 1-carboxylate + dimethylallyl diphosphate = 5,10-dihydro-9-dimethylallylphenazine 1-carboxylate + diphosphate. It participates in antibiotic biosynthesis; phenazine biosynthesis. With respect to regulation, does not require magnesium or any other divalent metal ions for activity. Functionally, involved in the biosynthesis of prenylated phenazines. Catalyzes the transfer of a dimethylallyl moiety to C-9 of 5,10-dihydrophenazine 1-carboxylate (dihydro-PCA). Specific for both dimethylallyl diphosphate and dihydro-PCA. This is 5,10-dihydrophenazine-1-carboxylate 9-dimethylallyltransferase from Streptomyces anulatus (Streptomyces chrysomallus).